The chain runs to 427 residues: Dihydroorotase (427 aa).

Zn(2+) is bound by residues His-60 and His-62. Residues 62-64 and Asn-94 each bind substrate; that span reads HLR. Asp-151, His-178, and His-231 together coordinate Zn(2+). A substrate-binding site is contributed by Asn-277. Zn(2+) is bound at residue Asp-304. Residue Asp-304 is part of the active site. Substrate contacts are provided by residues His-308 and 322-323; that span reads FG.

This sequence belongs to the metallo-dependent hydrolases superfamily. DHOase family. Class I DHOase subfamily. Zn(2+) is required as a cofactor.

It catalyses the reaction (S)-dihydroorotate + H2O = N-carbamoyl-L-aspartate + H(+). It functions in the pathway pyrimidine metabolism; UMP biosynthesis via de novo pathway; (S)-dihydroorotate from bicarbonate: step 3/3. Its function is as follows. Catalyzes the reversible cyclization of carbamoyl aspartate to dihydroorotate. The sequence is that of Dihydroorotase from Pelotomaculum thermopropionicum (strain DSM 13744 / JCM 10971 / SI).